The sequence spans 391 residues: Succinate--CoA ligase [ADP-forming] subunit beta (391 aa).

Positions 9–245 (KQIFAEYGVP…LSEEDPDEVE (237 aa)) constitute an ATP-grasp domain. ATP-binding positions include K46, 53–55 (GRG), E99, A102, and E107. Mg(2+) contacts are provided by N200 and D214. Residues N265 and 322-324 (GIV) each bind substrate.

This sequence belongs to the succinate/malate CoA ligase beta subunit family. In terms of assembly, heterotetramer of two alpha and two beta subunits. It depends on Mg(2+) as a cofactor.

The enzyme catalyses succinate + ATP + CoA = succinyl-CoA + ADP + phosphate. It catalyses the reaction GTP + succinate + CoA = succinyl-CoA + GDP + phosphate. Its pathway is carbohydrate metabolism; tricarboxylic acid cycle; succinate from succinyl-CoA (ligase route): step 1/1. Its function is as follows. Succinyl-CoA synthetase functions in the citric acid cycle (TCA), coupling the hydrolysis of succinyl-CoA to the synthesis of either ATP or GTP and thus represents the only step of substrate-level phosphorylation in the TCA. The beta subunit provides nucleotide specificity of the enzyme and binds the substrate succinate, while the binding sites for coenzyme A and phosphate are found in the alpha subunit. In Sulfurovum sp. (strain NBC37-1), this protein is Succinate--CoA ligase [ADP-forming] subunit beta.